Consider the following 556-residue polypeptide: MSSKPQIRPAENGEHCRSKMENGMDSMAPPTLSTYTPEEMVQQMKELITENNELKEAMKLHNQAMKDRYEELSIWREKQKEEREFYETKFKEAKQCLLAKCVENEQLQQQLQSLKEREEGAEMEGCATPEKEARQLKSKVQRLQAEKADLLAIISELQVKLNIASAEDSFVEIGMNEEVNRTARENQDNSSEMASNIAVYIRSKSADESKNLESEELTVSQLLCCLRNETQRREKLEKELQDHKERLSKMENETSNCLESGTQTNQEEESSEAIGSEVESLKKQICALFKELQEAHEKLKEAELIQKKLQEKCQTLEKVNSAAATELEEKQQLIYTIKKLELQVESVQAEVKLEQAKTQDEKTRYSSLQDAYNKLLAELTEAMKTISEMKVKEHDRVDKVVVEELNAKVLLAEQALAAKQLQMDEMKQLIAKQEEDLETMAVLRAQMEVYCSDFHAERAAREKIHEEKEQLAVQLAYLLKEQQNLEDLGRSSLAEMQNRHGARAPDREHSPRLVQRGTGSQEWPEQRNISIYSCPKCEEILPDLDTLQIHVMDCIN.

Residues Met-1–Ser-33 are disordered. Basic and acidic residues predominate over residues Glu-11 to Asn-22. Residues Glu-38–Ala-164 are a coiled coil. The short motif at Asp-168–Ile-173 is the LIR element. The stretch at Val-219–Asp-487 forms a coiled coil. The disordered stretch occupies residues Glu-245–Ile-274. Polar residues predominate over residues Glu-253–Asn-265. The UBAN motif lies at Asp-453 to Arg-458. The segment at Met-496–Pro-524 is disordered. The CCHC NOA-type zinc-finger motif lies at Gln-526–Asn-556. Residues Cys-534, Cys-537, His-550, and Cys-554 each contribute to the Zn(2+) site.

Binds to linear ubiquitin chains. Interacts with LC3 family members. As to expression, expressed in erythrocytes, skeletal muscle, heart, spleen and brain. Weakly expressed in lung and liver (at protein level).

It localises to the cytoplasm. The protein resides in the perinuclear region. The protein localises to the golgi apparatus. It is found in the trans-Golgi network. Its subcellular location is the cytoplasmic vesicle. It localises to the recycling endosome. The protein resides in the autophagosome. Probably part of the TNF-alpha signaling pathway that can shift the equilibrium toward induction of cell death. May act by regulating membrane trafficking and cellular morphogenesis. May act as autophagy receptor that interacts directly with both the cargo to become degraded and an autophagy modifier of the MAP1 LC3 family. The protein is Optineurin (OPTN) of Gallus gallus (Chicken).